Consider the following 1121-residue polypeptide: Brassinosteroid LRR receptor kinase BRI1 (1121 aa).

The signal sequence occupies residues Met-1–Ala-24. Residues Cys-54 to Cys-61 carry the Cys pair 1 motif. 17 LRR repeats span residues Leu-90–Arg-114, Gly-116–Ser-142, Cys-144–Gly-167, Phe-170–Val-193, Val-197–Gly-221, Gln-223–Asp-243, Cys-244–Leu-268, Thr-269–Lys-292, Gln-294–Leu-317, Pro-318–Asp-341, Asn-343–Cys-367, Ser-369–Leu-391, Gly-392–Ile-415, Gln-416–Cys-439, Lys-441–Leu-463, Ser-464–Cys-487, and Ser-489–Gln-511. Asn-102 carries N-linked (GlcNAc...) asparagine glycosylation. N-linked (GlcNAc...) asparagine glycosylation is present at Asn-151. Asn-218 is a glycosylation site (N-linked (GlcNAc...) asparagine). Asn-251, Asn-275, Asn-280, and Asn-307 each carry an N-linked (GlcNAc...) asparagine glycan. N-linked (GlcNAc...) asparagine glycosylation is found at Asn-366 and Asn-381. N-linked (GlcNAc...) asparagine glycosylation is found at Asn-473 and Asn-501. Tyr-525 serves as a coordination point for brassinolide. An LRR 18 repeat occupies Gly-541 to Asn-564. An N-linked (GlcNAc...) asparagine glycan is attached at Asn-564. Tyr-569 is a binding site for brassinolide. Residue Asn-580 is glycosylated (N-linked (GlcNAc...) asparagine). 4 LRR repeats span residues Asn-580–Asp-603, Met-604–Ala-628, Lys-629–Ala-651, and Leu-652–Thr-676. Asn-658, Asn-665, and Asn-684 each carry an N-linked (GlcNAc...) asparagine glycan. The short motif at Cys-689–Cys-696 is the Cys pair 2 element. Positions Leu-693–Arg-712 are disordered. Residues Ser-719–Gly-739 traverse the membrane as a helical segment. Positions Phe-807–Ile-1083 constitute a Protein kinase domain. ATP is bound by residues Ile-813–Val-821, Lys-835, Asp-881–Met-883, Ser-887–Asp-890, Asp-933–Asn-938, and Asp-951. The active-site Proton acceptor is Asp-933.

Belongs to the protein kinase superfamily. Ser/Thr protein kinase family. In terms of assembly, interacts with BIP103 and BIP131. Interacts with BAK1. Interacts with BSK3. Interacts with SERK2. As to expression, highly expressed in shoots. Expressed at low levels in roots.

Its subcellular location is the cell membrane. It catalyses the reaction L-seryl-[protein] + ATP = O-phospho-L-seryl-[protein] + ADP + H(+). The catalysed reaction is L-threonyl-[protein] + ATP = O-phospho-L-threonyl-[protein] + ADP + H(+). Functionally, receptor kinase involved brassinosteroid (BR) signal transduction. Regulates, in response to BR binding, a signaling cascade involved in plant development, promotion of cell elongation and flowering. Activates BR signaling by targeting and phosphorylating BSK3, a positive regulator of BR signaling. Forms at the plasma membrane a receptor complex with BAK1 which is activated in response to brassinolide. Phosphorylates BAK1. Phosphorylates REM4.1, which reduces REM4.1 binding affinity to BAK1 and allows the formation and subsequent activation of the BRI1-BAK1 receptor complex. Functions in various growth and developmental processes, such as internode elongation, bending of the lamina joint and skotomorphogenesis. Functions in internode elongation by inducing the formation of the intercalary meristem and the longitudinal elongation of internode cells. Involved in organ development through the control of cell division and elongation. Does not seem essential for organ pattern formation or organ initiation. The chain is Brassinosteroid LRR receptor kinase BRI1 from Oryza sativa subsp. japonica (Rice).